A 488-amino-acid chain; its full sequence is 3-octaprenyl-4-hydroxybenzoate carboxy-lyase (488 aa).

Asn172 lines the Mn(2+) pocket. Residues 175–177, 189–191, and 194–195 contribute to the prenylated FMN site; these read IYR, RWL, and RG. Mn(2+) is bound at residue Glu238. Asp287 acts as the Proton donor in catalysis.

This sequence belongs to the UbiD family. Homohexamer. The cofactor is prenylated FMN. Mn(2+) serves as cofactor.

Its subcellular location is the cell membrane. The enzyme catalyses a 4-hydroxy-3-(all-trans-polyprenyl)benzoate + H(+) = a 2-(all-trans-polyprenyl)phenol + CO2. It functions in the pathway cofactor biosynthesis; ubiquinone biosynthesis. Its function is as follows. Catalyzes the decarboxylation of 3-octaprenyl-4-hydroxy benzoate to 2-octaprenylphenol, an intermediate step in ubiquinone biosynthesis. The protein is 3-octaprenyl-4-hydroxybenzoate carboxy-lyase of Legionella pneumophila (strain Corby).